A 1755-amino-acid chain; its full sequence is MESQQLSQHSPISHGSACASVTSKEVHTNQDPLDVSASKTEECEKASTKANSQQTTTPASSAVPENPHHASPQPASVPPPQNGPYPQQCMMTQNQANPSGWSFYGHPSMIPYTPYQMSPMYFPPGPQSQFPQYPSSVGTPLSTPSPESGNTFTDSSSADSDMTSTKKYVRPPPMLTSPNDFPNWVKTYIKFLQNSNLGGIIPTVNGKPVRQITDDELTFLYNTFQIFAPSQFLPTWVKDILSVDYTDIMKILSKSIEKMQSDTQEANDIVTLANLQYNGSTPADAFETKVTNIIDRLNNNGIHINNKVACQLIMRGLSGEYKFLRYTRHRHLNMTVAELFLDIHAIYEEQQGSRNSKPNYRRNLSDEKNDSRSYTNTTKPKVIARNPQKTNNSKSKTARAHNVSTSNNSPSTDNDSISKSTTEPIQLNNKHDLHLGQELTESTVNHTNHSDDELPGHLLLDSGASRTLIRSAHHIHSASSNPDINVVDAQKRNIPINAIGDLQFHFQDNTKTSIKVLHTPNIAYDLLSLNELAAVDITACFTKNVLERSDGTVLAPIVKYGDFYWVSKKYLLPSNISVPTINNVHTSESTRKYPYPFIHRMLAHANAPTIRYSLKNNTITYFNESDVDWSSAIDYQCPDCLIGKSTKHRHIKGSRLKYQNSYEPFQYLHTDIFGPVHNLPNSAPSYFISFTDETTKFRWVYPLHDRREDSILDVFTTILAFIKNQFQASVLVIQMDRGSEYTNRTLHKFLEKNGITPCYTTTADSRAHGVAERLNRTLLDDCRTQLQCSGLPNHLWFSAIEFSTIVRNSLASPKSKKSARQHAGLAGLDISTLLPFGQPVIVNDHNPNSKIHPRGIPGYALHPSRNSYGYIIYLPSLKKTVDTTNYVILQGKESRLDQFNYDALTFDEDLNRLTASYHSFIASNEIQESNDLNIESDHDFQSDIELHPEQPRNVLSKAVSPTDSTPPSTHTEDSKRVSKTNIRAPREVDPNISESNILPSKKRSSTPQISNIESTGSGGMHKLNVPLLAPMSQSNTHESSHASKSKDFRHSDSYSENETNHTNVPISSTGGTNNKTVPQISDQETEKRIIHRSPSIDASPPENNSSHNIVPIKTPTTVSEQNTEESIIADLPLPDLPPESPTEFPDPFKELPPINSRQTNSSLGGIGDSNAYTTINSKKRSLEDNETEIKVSRDTWNTKNMRSLEPPRSKKRIHLIAAVKAVKSIKPIRTTLRYDEAITYNKDIKEKEKYIEAYHKEVNQLLKMKTWDTDEYYDRKEIDPKRVINSMFIFNKKRDGTHKARFVARGDIQHPDTYDSGMQSNTVHHYALMTSLSLALDNNYYITQLDISSAYLYADIKEELYIRPPPHLGMNDKLIRLKKSLYGLKQSGANWYETIKSYLIKQCGMEEVRGWSCVFKNSQVTICLFVDDMILFSKDLNANKKIITTLKKQYDTKIINLGESDNEIQYDILGLEIKYQRGKYMKLGMENSLTEKIPKLNVPLNPKGRKLSAPGQPGLYIDQDELEIDEDEYKEKVHEMQKLIGLASYVGYKFRFDLLYYINTLAQHILFPSRQVLDMTYELIQFMWDTRDKQLIWHKNKPTEPDNKLVAISDASYGNQPYYKSQIGNIYLLNGKVIGGKSTKASLTCTSTTEAEIHAISESVPLLNNLSYLIQELNKKPIIKGLLTDSRSTISIIKSTNEEKFRNRFFGTKAMRLRDEVSGNNLYVYYIETKKNIADVMTKPLPIKTFKLLTNKWIH.

Polar residues-rich tracts occupy residues 1-23 (MESQQLSQHSPISHGSACASVTS), 48-60 (TKANSQQTTTPAS), and 127-152 (QSQFPQYPSSVGTPLSTPSPESGNTF). 3 disordered regions span residues 1–93 (MESQ…MMTQ), 126–174 (PQSQ…PPPM), and 352–421 (GSRN…SKST). Low complexity predominate over residues 153–165 (TDSSSADSDMTST). The interval 299–401 (NNGIHINNKV…NSKSKTARAH (103 aa)) is RNA-binding. Low complexity predominate over residues 402-418 (NVSTSNNSPSTDNDSIS). Ser-416 is subject to Phosphoserine. The active-site For protease activity; shared with dimeric partner is Asp-461. The interval 583-640 (NVHTSESTRKYPYPFIHRMLAHANAPTIRYSLKNNTITYFNESDVDWSSAIDYQCPDC) is integrase-type zinc finger-like. Residues 660–835 (NSYEPFQYLH…AGLDISTLLP (176 aa)) enclose the Integrase catalytic domain. Positions 671 and 736 each coordinate Mg(2+). Disordered stretches follow at residues 956 to 1087 (SKAV…ETEK), 1092 to 1111 (RSPSIDASPPENNSSHNIVP), and 1130 to 1187 (DLPL…DNET). A compositionally biased stretch (low complexity) spans 960-969 (SPTDSTPPST). Polar residues predominate over residues 1005–1015 (STPQISNIEST). Basic and acidic residues predominate over residues 1038–1053 (ESSHASKSKDFRHSDS). Composition is skewed to polar residues over residues 1054 to 1082 (YSENETNHTNVPISSTGGTNNKTVPQISD) and 1101 to 1111 (PENNSSHNIVP). Positions 1178-1212 (KKRSLEDNETEIKVSRDTWNTKNMRSLEPPRSKKR) match the Bipartite nuclear localization signal motif. The region spanning 1338 to 1476 (NNYYITQLDI…DILGLEIKYQ (139 aa)) is the Reverse transcriptase Ty1/copia-type domain. The Mg(2+) site is built by Asp-1346, Asp-1427, Asp-1428, Asp-1610, Glu-1652, and Asp-1685. The 143-residue stretch at 1610 to 1752 (DASYGNQPYY…IKTFKLLTNK (143 aa)) folds into the RNase H Ty1/copia-type domain.

In terms of assembly, the capsid protein forms a homotrimer, from which the VLPs are assembled. The protease is a homodimer, whose active site consists of two apposed aspartic acid residues. Initially, virus-like particles (VLPs) are composed of the structural unprocessed proteins Gag and Gag-Pol, and also contain the host initiator methionine tRNA (tRNA(i)-Met) which serves as a primer for minus-strand DNA synthesis, and a dimer of genomic Ty RNA. Processing of the polyproteins occurs within the particle and proceeds by an ordered pathway, called maturation. First, the protease (PR) is released by autocatalytic cleavage of the Gag-Pol polyprotein yielding capsid protein p45 and a Pol-p154 precursor protein. This cleavage is a prerequisite for subsequent processing of Pol-p154 at the remaining sites to release the mature structural and catalytic proteins. Maturation takes place prior to the RT reaction and is required to produce transposition-competent VLPs.

The protein localises to the cytoplasm. It is found in the nucleus. The catalysed reaction is DNA(n) + a 2'-deoxyribonucleoside 5'-triphosphate = DNA(n+1) + diphosphate. It carries out the reaction Endonucleolytic cleavage to 5'-phosphomonoester.. Capsid protein (CA) is the structural component of the virus-like particle (VLP), forming the shell that encapsulates the retrotransposons dimeric RNA genome. The particles are assembled from trimer-clustered units and there are holes in the capsid shells that allow for the diffusion of macromolecules. CA also has nucleocapsid-like chaperone activity, promoting primer tRNA(i)-Met annealing to the multipartite primer-binding site (PBS), dimerization of Ty1 RNA and initiation of reverse transcription. In terms of biological role, the aspartyl protease (PR) mediates the proteolytic cleavages of the Gag and Gag-Pol polyproteins after assembly of the VLP. Its function is as follows. Reverse transcriptase/ribonuclease H (RT) is a multifunctional enzyme that catalyzes the conversion of the retro-elements RNA genome into dsDNA within the VLP. The enzyme displays a DNA polymerase activity that can copy either DNA or RNA templates, and a ribonuclease H (RNase H) activity that cleaves the RNA strand of RNA-DNA heteroduplexes during plus-strand synthesis and hydrolyzes RNA primers. The conversion leads to a linear dsDNA copy of the retrotransposon that includes long terminal repeats (LTRs) at both ends. Functionally, integrase (IN) targets the VLP to the nucleus, where a subparticle preintegration complex (PIC) containing at least integrase and the newly synthesized dsDNA copy of the retrotransposon must transit the nuclear membrane. Once in the nucleus, integrase performs the integration of the dsDNA into the host genome. The sequence is that of Transposon Ty1-LR2 Gag-Pol polyprotein (TY1B-LR2) from Saccharomyces cerevisiae (strain ATCC 204508 / S288c) (Baker's yeast).